A 250-amino-acid chain; its full sequence is Keratin-associated protein 9-1 (250 aa).

32 tandem repeats follow at residues 8–12 (CCQPT), 13–17 (CCRTT), 18–22 (CCRTT), 37–41 (CCQPS), 42–46 (CCVPS), 51–55 (CCHPT), 56–60 (CCQNT), 61–65 (CCRTT), 66–70 (CCQPT), 75–79 (CCQPS), 80–84 (CCSTP), 85–89 (CCQPT), 90–94 (CCGSS), 95–99 (CCGQT), 105–109 (CCQPI), 114–117 (CCQP), 118–121 (CCHP), 133–137 (CCQPT), 138–142 (CCQPT), 143–147 (CCRNT), 153–157 (CCGSS), 162–166 (CCHPT), 167–171 (CCQTI), 176–180 (CCQPS), 185–189 (CCSTP), 190–194 (CCQPT), 214–218 (CCRPT), 219–223 (CCQTT), 229–233 (CCRPS), 234–238 (CCCSP), 239–243 (CCVSS), and 244–248 (CCQPS). Residues 8–248 (CCQPTCCRTT…CCVSSCCQPS (241 aa)) form a 32 X 5 AA repeats of C-C-[CGSVRQH]-[SQTNP]-[PTSI] region.

This sequence belongs to the KRTAP type 9 family. In terms of assembly, interacts with hair keratins.

In the hair cortex, hair keratin intermediate filaments are embedded in an interfilamentous matrix, consisting of hair keratin-associated proteins (KRTAP), which are essential for the formation of a rigid and resistant hair shaft through their extensive disulfide bond cross-linking with abundant cysteine residues of hair keratins. The matrix proteins include the high-sulfur and high-glycine-tyrosine keratins. The chain is Keratin-associated protein 9-1 from Homo sapiens (Human).